A 405-amino-acid chain; its full sequence is Subtilisin-like protease 6 (405 aa).

The first 18 residues, 1-18, serve as a signal peptide directing secretion; it reads FITKAIPIVLAALSAVNG. The propeptide occupies 19–125; it reads AKILEAGPHA…VRTSTNGTNL (107 aa). The Inhibitor I9 domain occupies 34–118; it reads KYIVVMKKDV…YIEPDFVVRT (85 aa). Residues Asn121 and Asn124 are each glycosylated (N-linked (GlcNAc...) asparagine). Residues 133 to 405 form the Peptidase S8 domain; the sequence is SWGLARVGSK…GEGTTGKLIY (273 aa). Active-site charge relay system residues include Asp165 and His196. N-linked (GlcNAc...) asparagine glycosylation is found at Asn250 and Asn262. Ser356 (charge relay system) is an active-site residue.

The protein belongs to the peptidase S8 family.

It is found in the secreted. Secreted subtilisin-like serine protease with keratinolytic activity that contributes to pathogenicity. The polypeptide is Subtilisin-like protease 6 (SUB6) (Trichophyton schoenleinii).